The primary structure comprises 102 residues: Alpha-hemoglobin-stabilizing protein (102 aa).

The protein belongs to the AHSP family. Monomer. Forms a heterodimer with free alpha-hemoglobin. Does not bind beta-hemoglobin nor alpha(2)beta(2) hemoglobin A. In terms of tissue distribution, expressed in blood and bone marrow.

It localises to the cytoplasm. In terms of biological role, acts as a chaperone to prevent the harmful aggregation of alpha-hemoglobin during normal erythroid cell development. Specifically protects free alpha-hemoglobin from precipitation. It is predicted to modulate pathological states of alpha-hemoglobin excess such as beta-thalassemia. In Homo sapiens (Human), this protein is Alpha-hemoglobin-stabilizing protein (AHSP).